The chain runs to 863 residues: Bifunctional uridylyltransferase/uridylyl-removing enzyme (863 aa).

Residues 1-328 form a uridylyltransferase region; the sequence is MLFSPTLSSP…PSNQDTVIDQ (328 aa). Residues 329–687 are uridylyl-removing; that stretch reads LDDDFQLINQ…ISNRFSLGGT (359 aa). Residues 446-568 form the HD domain; it reads VDEHTLRVML…VQNQVRLDYL (123 aa). ACT domains are found at residues 688 to 772 and 794 to 863; these read EVFI…PNRQ and QMEL…RNIG.

This sequence belongs to the GlnD family. The cofactor is Mg(2+).

The catalysed reaction is [protein-PII]-L-tyrosine + UTP = [protein-PII]-uridylyl-L-tyrosine + diphosphate. It carries out the reaction [protein-PII]-uridylyl-L-tyrosine + H2O = [protein-PII]-L-tyrosine + UMP + H(+). With respect to regulation, uridylyltransferase (UTase) activity is inhibited by glutamine, while glutamine activates uridylyl-removing (UR) activity. Its function is as follows. Modifies, by uridylylation and deuridylylation, the PII regulatory proteins (GlnB and homologs), in response to the nitrogen status of the cell that GlnD senses through the glutamine level. Under low glutamine levels, catalyzes the conversion of the PII proteins and UTP to PII-UMP and PPi, while under higher glutamine levels, GlnD hydrolyzes PII-UMP to PII and UMP (deuridylylation). Thus, controls uridylylation state and activity of the PII proteins, and plays an important role in the regulation of nitrogen assimilation and metabolism. The sequence is that of Bifunctional uridylyltransferase/uridylyl-removing enzyme from Haemophilus influenzae (strain 86-028NP).